A 346-amino-acid chain; its full sequence is Holliday junction branch migration complex subunit RuvB (346 aa).

Residues 1–181 (MSDRNPLIDA…FGIPVRLNFY (181 aa)) are large ATPase domain (RuvB-L). ATP is bound by residues Leu-20, Arg-21, Gly-62, Lys-65, Thr-66, Thr-67, 128 to 130 (EDF), Arg-171, Tyr-181, and Arg-218. Residue Thr-66 participates in Mg(2+) binding. The small ATPAse domain (RuvB-S) stretch occupies residues 182 to 252 (TVEELEYIVR…IADEALSRLE (71 aa)). The head domain (RuvB-H) stretch occupies residues 255–346 (NRGLDQLDRR…SQYGLFMEDE (92 aa)). DNA is bound by residues Arg-291, Arg-310, and Arg-315.

This sequence belongs to the RuvB family. In terms of assembly, homohexamer. Forms an RuvA(8)-RuvB(12)-Holliday junction (HJ) complex. HJ DNA is sandwiched between 2 RuvA tetramers; dsDNA enters through RuvA and exits via RuvB. An RuvB hexamer assembles on each DNA strand where it exits the tetramer. Each RuvB hexamer is contacted by two RuvA subunits (via domain III) on 2 adjacent RuvB subunits; this complex drives branch migration. In the full resolvosome a probable DNA-RuvA(4)-RuvB(12)-RuvC(2) complex forms which resolves the HJ.

The protein resides in the cytoplasm. It carries out the reaction ATP + H2O = ADP + phosphate + H(+). In terms of biological role, the RuvA-RuvB-RuvC complex processes Holliday junction (HJ) DNA during genetic recombination and DNA repair, while the RuvA-RuvB complex plays an important role in the rescue of blocked DNA replication forks via replication fork reversal (RFR). RuvA specifically binds to HJ cruciform DNA, conferring on it an open structure. The RuvB hexamer acts as an ATP-dependent pump, pulling dsDNA into and through the RuvAB complex. RuvB forms 2 homohexamers on either side of HJ DNA bound by 1 or 2 RuvA tetramers; 4 subunits per hexamer contact DNA at a time. Coordinated motions by a converter formed by DNA-disengaged RuvB subunits stimulates ATP hydrolysis and nucleotide exchange. Immobilization of the converter enables RuvB to convert the ATP-contained energy into a lever motion, pulling 2 nucleotides of DNA out of the RuvA tetramer per ATP hydrolyzed, thus driving DNA branch migration. The RuvB motors rotate together with the DNA substrate, which together with the progressing nucleotide cycle form the mechanistic basis for DNA recombination by continuous HJ branch migration. Branch migration allows RuvC to scan DNA until it finds its consensus sequence, where it cleaves and resolves cruciform DNA. The chain is Holliday junction branch migration complex subunit RuvB from Brucella suis (strain ATCC 23445 / NCTC 10510).